A 526-amino-acid chain; its full sequence is 3',5'-cyclic-nucleotide phosphodiesterase 2 (526 aa).

The PDEase domain occupies 182-526 (RNIEFMSFLS…EYWMKHKKPQ (345 aa)). His-265 serves as the catalytic Proton donor. Positions 269, 302, 303, and 400 each coordinate a divalent metal cation.

The protein belongs to the cyclic nucleotide phosphodiesterase family. In terms of assembly, monomer. A divalent metal cation is required as a cofactor.

The enzyme catalyses 3',5'-cyclic AMP + H2O = AMP + H(+). Functionally, controls the level of cAMP in yeast cells, together with the low-affinity cAMP phosphodiesterase (PDE1). This chain is 3',5'-cyclic-nucleotide phosphodiesterase 2, found in Saccharomyces cerevisiae (strain ATCC 204508 / S288c) (Baker's yeast).